A 1067-amino-acid polypeptide reads, in one-letter code: Lon protease homolog, mitochondrial (1067 aa).

The transit peptide at 1–36 (MITRLSGACLRRSGAKRNWPREHLVHRSLLASFSTT) directs the protein to the mitochondrion. Positions 55-82 (KSKEPKDNKPLDNKNDPKKTHNEDESHT) are enriched in basic and acidic residues. Disordered regions lie at residues 55 to 142 (KSKE…MPLN) and 262 to 314 (IPPK…ESTP). Positions 128–139 (FELGGEENEDEM) are enriched in acidic residues. The region spanning 162-425 (LLALPIARRP…KALYVLKKEL (264 aa)) is the Lon N-terminal domain. The span at 293-311 (VKSDLKQDNGKEEPEKEVE) shows a compositional bias: basic and acidic residues. Residue 578–585 (GPPGVGKT) participates in ATP binding. The segment at 791 to 820 (NSKEKSTGKSGKKTSPQSSEDAANKEASSV) is disordered. The 187-residue stretch at 854 to 1040 (TTPPGVVMGL…DDVFKRVFSN (187 aa)) folds into the Lon proteolytic domain. Active-site residues include S946 and K989.

This sequence belongs to the peptidase S16 family. As to quaternary structure, homohexamer or homoheptamer. Organized in a ring with a central cavity.

Its subcellular location is the mitochondrion matrix. It carries out the reaction Hydrolysis of proteins in presence of ATP.. ATP-dependent serine protease that mediates the selective degradation of misfolded, unassembled or oxidatively damaged polypeptides as well as certain short-lived regulatory proteins in the mitochondrial matrix. May also have a chaperone function in the assembly of inner membrane protein complexes. Participates in the regulation of mitochondrial gene expression and in the maintenance of the integrity of the mitochondrial genome. Binds to mitochondrial DNA in a site-specific manner. This chain is Lon protease homolog, mitochondrial (pim1), found in Schizosaccharomyces pombe (strain 972 / ATCC 24843) (Fission yeast).